Here is a 213-residue protein sequence, read N- to C-terminus: Imidazole glycerol phosphate synthase subunit HisH (213 aa).

The 208-residue stretch at 4-211 (NLGLIDYGMG…LTWLRNGAEP (208 aa)) folds into the Glutamine amidotransferase type-1 domain. C82 acts as the Nucleophile in catalysis. Active-site residues include H186 and E188.

As to quaternary structure, heterodimer of HisH and HisF.

The protein resides in the cytoplasm. The catalysed reaction is 5-[(5-phospho-1-deoxy-D-ribulos-1-ylimino)methylamino]-1-(5-phospho-beta-D-ribosyl)imidazole-4-carboxamide + L-glutamine = D-erythro-1-(imidazol-4-yl)glycerol 3-phosphate + 5-amino-1-(5-phospho-beta-D-ribosyl)imidazole-4-carboxamide + L-glutamate + H(+). It catalyses the reaction L-glutamine + H2O = L-glutamate + NH4(+). It functions in the pathway amino-acid biosynthesis; L-histidine biosynthesis; L-histidine from 5-phospho-alpha-D-ribose 1-diphosphate: step 5/9. Its function is as follows. IGPS catalyzes the conversion of PRFAR and glutamine to IGP, AICAR and glutamate. The HisH subunit catalyzes the hydrolysis of glutamine to glutamate and ammonia as part of the synthesis of IGP and AICAR. The resulting ammonia molecule is channeled to the active site of HisF. The chain is Imidazole glycerol phosphate synthase subunit HisH from Synechococcus sp. (strain CC9605).